Reading from the N-terminus, the 231-residue chain is Uracil-DNA glycosylase (231 aa).

Asp71 serves as the catalytic Proton acceptor.

It belongs to the uracil-DNA glycosylase (UDG) superfamily. UNG family.

The protein resides in the cytoplasm. It catalyses the reaction Hydrolyzes single-stranded DNA or mismatched double-stranded DNA and polynucleotides, releasing free uracil.. In terms of biological role, excises uracil residues from the DNA which can arise as a result of misincorporation of dUMP residues by DNA polymerase or due to deamination of cytosine. The polypeptide is Uracil-DNA glycosylase (Pseudomonas aeruginosa (strain UCBPP-PA14)).